The following is a 728-amino-acid chain: MKKTFIFLYCVVLFISTTLAVEMKKTQDFNLRIFDQHPKYNNNFEPENGVLTVNLVKSILNETTGIPELTTMSNLTTVNKQGRIYSPELFKYFFADNSDAPDRNNSGKNYPLDITLTMNLDDKSNYFYDNQEFFPIDGRGFDVDQQFRNYYDDESKANPKPYHNYHFCAKITNSRFTYKGFETFRFVGDDDVWVFIDRKLVVDLGGLHIAQEKTIDLTKLGLVVNKLYVIDFFYCERHTSRSTIRIETTIELQCPWYDFCGVCTGNGLSCCNVTRDCDDGNPCTIDLCPEPTAVFDLKDISANCRHQDRTPTDWSVTDKCNTGKCNVSTGIFVTNITKCIPQNSCKAEDHCDSGLGCIFKNLCTDVCSTGACVDGKCETKNSKICIDELDKGVEDKCYEYSCDPNVGCTKKPRCLQKSENYNPCLNSFCEVSTGECKNTTIPPNLCDCQCDGKLNKCQIKSCNADGSCKPLPSLEIDDKNPCTIDACDETTGVITHTLSNKCGGCSICNGVTGDCDPVDKKCDDGNRCTTEVCLLDKATNNGNCSSKPTTECDKGDVCMVYSCDTEKGCVETPRVCPSKGKCQVGKCVPGVGCKYEPRVCKADAFCLVAECDEIVGCIQFEKKCAADNGRCQAGICKNATATEEGTCESVDFDPKPFICKTAAVVSVGVAVGVAVGGAIALGVFIFAGKKGYDYWKASQGVTMATSNANPLYESNPSGGENPIYTSPN.

The first 20 residues, Met1–Ala20, serve as a signal peptide directing secretion. The Extracellular segment spans residues Val21 to Ser666. Asn61, Asn74, and Asn104 each carry an N-linked (GlcNAc...) asparagine glycan. The PA14 domain occupies Met118–Asn266. N-linked (GlcNAc...) asparagine glycans are attached at residues Asn272, Asn326, Asn335, Asn438, Asn543, and Asn638. The chain crosses the membrane as a helical span at residues Val667–Ala687. Residues Gly688–Asn728 are Cytoplasmic-facing.

This sequence belongs to the prespore-cell-inducing factor family.

Its subcellular location is the membrane. This is Protein psiK (psiK) from Dictyostelium discoideum (Social amoeba).